The sequence spans 428 residues: MTTISDIYAREILDSRGNPTVEVEVFLESGGWGRAAVPSGASTGAYEAVELRDKDPKRYGGKGVLDAVNNINAIIAPELVGSDALDQREIDRQLIEMDGTPNKGKLGANAILGVSLAVAKAAADALGLPLYRYLGGVNAHTLPVPMMNILNGGKHADNNVDIQEFMVMPAGASDFASALRMGAEVFHSLKAVLQSKGLNTAVGDEGGFAPNLRSNVEAIEVLLEAIAKAGYEPGKDCFIALDPASTELYKDGKYVFAGEGVTRTSDEMVEFWASLVDKYPIISIEDGLAEDDWEGWQNLTKRLGHKVQLVGDDLFVTNTERLSRGIEMGAANAILIKVNQIGTLTETLEAIEMAKKAGYTAVVSHRSGETEDTTIADIVVAVNAGQIKTGAPSRTERVAKYNQLLRIEEELDAAALYPGLKAFYNLKK.

Q163 provides a ligand contact to (2R)-2-phosphoglycerate. Catalysis depends on E205, which acts as the Proton donor. Mg(2+) is bound by residues D242, E285, and D312. The (2R)-2-phosphoglycerate site is built by K337, R366, S367, and K388. K337 serves as the catalytic Proton acceptor.

The protein belongs to the enolase family. The cofactor is Mg(2+).

It localises to the cytoplasm. The protein resides in the secreted. Its subcellular location is the cell surface. It carries out the reaction (2R)-2-phosphoglycerate = phosphoenolpyruvate + H2O. Its pathway is carbohydrate degradation; glycolysis; pyruvate from D-glyceraldehyde 3-phosphate: step 4/5. Functionally, catalyzes the reversible conversion of 2-phosphoglycerate (2-PG) into phosphoenolpyruvate (PEP). It is essential for the degradation of carbohydrates via glycolysis. This chain is Enolase, found in Moorella thermoacetica (strain ATCC 39073 / JCM 9320).